A 158-amino-acid chain; its full sequence is NADH-quinone oxidoreductase subunit B (158 aa).

Residues Cys37, Cys38, Cys102, and Cys132 each contribute to the [4Fe-4S] cluster site.

Belongs to the complex I 20 kDa subunit family. As to quaternary structure, NDH-1 is composed of 14 different subunits. Subunits NuoB, C, D, E, F, and G constitute the peripheral sector of the complex. It depends on [4Fe-4S] cluster as a cofactor.

It localises to the cell inner membrane. The catalysed reaction is a quinone + NADH + 5 H(+)(in) = a quinol + NAD(+) + 4 H(+)(out). NDH-1 shuttles electrons from NADH, via FMN and iron-sulfur (Fe-S) centers, to quinones in the respiratory chain. Couples the redox reaction to proton translocation (for every two electrons transferred, four hydrogen ions are translocated across the cytoplasmic membrane), and thus conserves the redox energy in a proton gradient. The chain is NADH-quinone oxidoreductase subunit B from Bordetella petrii (strain ATCC BAA-461 / DSM 12804 / CCUG 43448).